Here is a 510-residue protein sequence, read N- to C-terminus: 2,3-bisphosphoglycerate-independent phosphoglycerate mutase (510 aa).

2 residues coordinate Mn(2+): aspartate 14 and serine 64. Catalysis depends on serine 64, which acts as the Phosphoserine intermediate. Residues histidine 125, 155–156 (RD), arginine 187, arginine 193, 259–262 (RADR), and lysine 332 contribute to the substrate site. Aspartate 399, histidine 403, aspartate 440, histidine 441, and histidine 459 together coordinate Mn(2+).

The protein belongs to the BPG-independent phosphoglycerate mutase family. In terms of assembly, monomer. Mn(2+) serves as cofactor.

It catalyses the reaction (2R)-2-phosphoglycerate = (2R)-3-phosphoglycerate. Its pathway is carbohydrate degradation; glycolysis; pyruvate from D-glyceraldehyde 3-phosphate: step 3/5. In terms of biological role, catalyzes the interconversion of 2-phosphoglycerate and 3-phosphoglycerate. This chain is 2,3-bisphosphoglycerate-independent phosphoglycerate mutase, found in Pseudomonas savastanoi pv. phaseolicola (strain 1448A / Race 6) (Pseudomonas syringae pv. phaseolicola (strain 1448A / Race 6)).